Consider the following 274-residue polypeptide: Cytochrome b-c1 complex subunit Rieske, mitochondrial (274 aa).

The Mitochondrial matrix segment spans residues 79–103 (SHTDVRVPDFSEYRRLEVLDSTKSS). A helical transmembrane segment spans residues 104–140 (RESSEARKGFSYLVTGVTTVGVAYAAKNVVTQFVSSM). Residues 141–274 (SASADVLALA…FTSDDMVIVG (134 aa)) lie on the Mitochondrial intermembrane side of the membrane. One can recognise a Rieske domain in the interval 187–272 (EAAVELSQLR…YEFTSDDMVI (86 aa)). Residues Cys217, His219, Cys236, His239, and Ser241 each coordinate [2Fe-2S] cluster. Cys222 and Cys238 are oxidised to a cystine.

It belongs to the Rieske iron-sulfur protein family. In terms of assembly, component of the ubiquinol-cytochrome c oxidoreductase (cytochrome b-c1 complex, complex III, CIII), a multisubunit enzyme composed of 11 subunits. The complex is composed of 3 respiratory subunits cytochrome b, cytochrome c1 and Rieske protein UQCRFS1, 2 core protein subunits UQCRC1/QCR1 and UQCRC2/QCR2, and 6 low-molecular weight protein subunits UQCRH/QCR6, UQCRB/QCR7, UQCRQ/QCR8, UQCR10/QCR9, UQCR11/QCR10 and subunit 9, the cleavage product of Rieske protein UQCRFS1. The complex exists as an obligatory dimer and forms supercomplexes (SCs) in the inner mitochondrial membrane with NADH-ubiquinone oxidoreductase (complex I, CI) and cytochrome c oxidase (complex IV, CIV), resulting in different assemblies (supercomplex SCI(1)III(2)IV(1) and megacomplex MCI(2)III(2)IV(2)). Incorporation of the Rieske protein UQCRFS1 is the penultimate step in complex III assembly. Interacts with TTC19, which is involved in the clearance of UQCRFS1 fragments. As to quaternary structure, component of the ubiquinol-cytochrome c oxidoreductase (cytochrome b-c1 complex, complex III, CIII). Subunit 9 corresponds to the mitochondrial targeting sequence (MTS) of Rieske protein UQCRFS1. It is retained after processing and incorporated inside complex III, where it remains bound to the complex and localizes between the 2 core subunits UQCRC1/QCR1 and UQCRC2/QCR2. [2Fe-2S] cluster is required as a cofactor. Post-translationally, proteolytic processing is necessary for the correct insertion of UQCRFS1 in the complex III dimer. Several fragments are generated during UQCRFS1 insertion, most probably due to the endogenous matrix-processing peptidase (MPP) activity of the 2 core protein subunits UQCRC1/QCR1 and UQCRC2/QCR2, which are homologous to the 2 mitochondrial-processing peptidase (MPP) subunits beta-MPP and alpha-MPP respectively. The action of the protease is also necessary for the clearance of the UQCRFS1 fragments.

It is found in the mitochondrion inner membrane. The catalysed reaction is a quinol + 2 Fe(III)-[cytochrome c](out) = a quinone + 2 Fe(II)-[cytochrome c](out) + 2 H(+)(out). Its function is as follows. Component of the ubiquinol-cytochrome c oxidoreductase, a multisubunit transmembrane complex that is part of the mitochondrial electron transport chain which drives oxidative phosphorylation. The respiratory chain contains 3 multisubunit complexes succinate dehydrogenase (complex II, CII), ubiquinol-cytochrome c oxidoreductase (cytochrome b-c1 complex, complex III, CIII) and cytochrome c oxidase (complex IV, CIV), that cooperate to transfer electrons derived from NADH and succinate to molecular oxygen, creating an electrochemical gradient over the inner membrane that drives transmembrane transport and the ATP synthase. The cytochrome b-c1 complex catalyzes electron transfer from ubiquinol to cytochrome c, linking this redox reaction to translocation of protons across the mitochondrial inner membrane, with protons being carried across the membrane as hydrogens on the quinol. In the process called Q cycle, 2 protons are consumed from the matrix, 4 protons are released into the intermembrane space and 2 electrons are passed to cytochrome c. The Rieske protein is a catalytic core subunit containing a [2Fe-2S] iron-sulfur cluster. It cycles between 2 conformational states during catalysis to transfer electrons from the quinol bound in the Q(0) site in cytochrome b to cytochrome c1. Incorporation of UQCRFS1 is the penultimate step in complex III assembly. In terms of biological role, component of the ubiquinol-cytochrome c oxidoreductase (cytochrome b-c1 complex, complex III, CIII). UQCRFS1 undergoes proteolytic processing once it is incorporated in the complex III dimer. One of the fragments, called subunit 9, corresponds to its mitochondrial targeting sequence (MTS). The proteolytic processing is necessary for the correct insertion of UQCRFS1 in the complex III dimer, but the persistence of UQCRFS1-derived fragments may prevent newly imported UQCRFS1 to be processed and assembled into complex III and is detrimental for the complex III structure and function. This Pongo pygmaeus (Bornean orangutan) protein is Cytochrome b-c1 complex subunit Rieske, mitochondrial (UQCRFS1).